The sequence spans 160 residues: Transcription factor 12 (160 aa).

Residues 1–58 (NKEKDENLHEPPSSDDMKSDDESSQKDIKVSSRGRTSTNEDEDLNPEQKIEREKERRM) are disordered. A compositionally biased stretch (basic and acidic residues) spans 15 to 30 (DDMKSDDESSQKDIKV). Position 19 is a phosphoserine (Ser19). Residue Lys29 forms a Glycyl lysine isopeptide (Lys-Gly) (interchain with G-Cter in SUMO2) linkage. Thr36 is subject to Phosphothreonine. At Ser37 the chain carries Phosphoserine. A compositionally biased stretch (basic and acidic residues) spans 46 to 58 (PEQKIEREKERRM). Residues 55–108 (ERRMANNARERLRVRDINEAFKELGRMCQLHLKSEKPQTKLLILHQAVAVILSL) enclose the bHLH domain. Glycyl lysine isopeptide (Lys-Gly) (interchain with G-Cter in SUMO2) cross-links involve residues Lys87 and Lys131. The interval 110 to 133 (QQVRERNLNPKAACLKRREEEKVS) is class A specific domain. Positions 132–160 (VSVVSAEPPTTLPGTHPGLSETTNPMGHM) are disordered. Low complexity predominate over residues 139-150 (PPTTLPGTHPGL). A compositionally biased stretch (polar residues) spans 151 to 160 (SETTNPMGHM).

In terms of assembly, efficient DNA binding requires dimerization with another bHLH protein. Forms homo- or heterooligomers with myogenin, E12 and ITF2 proteins. Interacts with PTF1A. Interacts with RUNX1T1. Interacts with NEUROD2. Interacts with BHLHA9.

The protein localises to the nucleus. Its function is as follows. Transcriptional regulator. Involved in the initiation of neuronal differentiation. Activates transcription by binding to the E box (5'-CANNTG-3'). May be involved in the functional network that regulates the development of the GnRH axis. In Papio hamadryas (Hamadryas baboon), this protein is Transcription factor 12 (TCF12).